Here is a 469-residue protein sequence, read N- to C-terminus: MTRPVRTRFAPSPTGFIHLGNIRSALYPWAFARKMKGTFVLRIEDTDVERSSQEAVDAILEGMQWLGLDFDEGPIYQMQRMDRYREVLAQMLEKGLAYPCYMSAEELDALRERQREAGLKPRYDGTWRPEPGKVLPEPPAGVKPVLRFRNPLTGTVVWDDAVKGRVEISNEELDDLVIARPDGTPIYNFCVVVDDMDMGITHVIRGDDHVNNTPRQINILNALGGEPPVYAHLPTVLNEQGEKMSKRHGAMSVMAYRDAGFLPEAVVNYLARLGWSHGDAEIFSREQFVEWFDLEHLGKSPAQYDHSKLSWLNAHYIKEADNARLAELAKPFLDALGIDDAAIATGPALDAVVGLMKDRATTVKEIAEGAAMFYRVPAPDADALAQHVTDAVRPALADLAAALKAADWTKEAVSAALKATLATHKLKMPQLAMSVRLLVAGTTHTPSIDAVLVLFGRDVVVTRIEAALA.

The 'HIGH' region signature appears at Pro11–Asn21. The short motif at Lys243 to Arg247 is the 'KMSKS' region element. Residue Lys246 participates in ATP binding.

The protein belongs to the class-I aminoacyl-tRNA synthetase family. Glutamate--tRNA ligase type 1 subfamily. Monomer.

It is found in the cytoplasm. It catalyses the reaction tRNA(Glu) + L-glutamate + ATP = L-glutamyl-tRNA(Glu) + AMP + diphosphate. Functionally, catalyzes the attachment of glutamate to tRNA(Glu) in a two-step reaction: glutamate is first activated by ATP to form Glu-AMP and then transferred to the acceptor end of tRNA(Glu). This chain is Glutamate--tRNA ligase, found in Burkholderia orbicola (strain AU 1054).